The following is a 485-amino-acid chain: Glutamyl-tRNA(Gln) amidotransferase subunit A (485 aa).

Active-site charge relay system residues include lysine 79 and serine 154. The active-site Acyl-ester intermediate is serine 178.

Belongs to the amidase family. GatA subfamily. As to quaternary structure, heterotrimer of A, B and C subunits.

The catalysed reaction is L-glutamyl-tRNA(Gln) + L-glutamine + ATP + H2O = L-glutaminyl-tRNA(Gln) + L-glutamate + ADP + phosphate + H(+). Allows the formation of correctly charged Gln-tRNA(Gln) through the transamidation of misacylated Glu-tRNA(Gln) in organisms which lack glutaminyl-tRNA synthetase. The reaction takes place in the presence of glutamine and ATP through an activated gamma-phospho-Glu-tRNA(Gln). The polypeptide is Glutamyl-tRNA(Gln) amidotransferase subunit A (Persephonella marina (strain DSM 14350 / EX-H1)).